We begin with the raw amino-acid sequence, 148 residues long: Short form salivary protein D7S1 (148 aa).

A signal peptide spans 1 to 21 (MKQNVFFLIAYFSLVFCMCNA). Disulfide bonds link C28–C61, C41–C147, and C103–C119.

Belongs to the PBP/GOBP family. In terms of tissue distribution, female salivary gland.

It is found in the secreted. In contrast to the related D7 salivary proteins that can bind biogenic amines, does not bind serotonin. This chain is Short form salivary protein D7S1, found in Aedes aegypti (Yellowfever mosquito).